The primary structure comprises 349 residues: Flap endonuclease 1 (349 aa).

The N-domain stretch occupies residues 1 to 98 (MDLADLVKDV…EELERRRKAK (98 aa)). Mg(2+) contacts are provided by Asp27, Asp80, Glu152, Glu154, Asp173, Asp175, and Asp236. Residues 116–258 (ELRKYSQAIL…RALKIIKKYG (143 aa)) are I-domain. The tract at residues 341 to 349 (RQTGLDRWF) is interaction with PCNA.

This sequence belongs to the XPG/RAD2 endonuclease family. FEN1 subfamily. As to quaternary structure, interacts with PCNA via subunit PCNA1. The cofactor is Mg(2+).

Heterotrimeric PCNA stimulates the nuclease activity without altering cleavage specificity. Structure-specific nuclease with 5'-flap endonuclease and 5'-3' exonuclease activities involved in DNA replication and repair. During DNA replication, cleaves the 5'-overhanging flap structure that is generated by displacement synthesis when DNA polymerase encounters the 5'-end of a downstream Okazaki fragment. Binds the unpaired 3'-DNA end and kinks the DNA to facilitate 5' cleavage specificity. Cleaves one nucleotide into the double-stranded DNA from the junction in flap DNA, leaving a nick for ligation. Also involved in the base excision repair (BER) pathway. Acts as a genome stabilization factor that prevents flaps from equilibrating into structures that lead to duplications and deletions. Also possesses 5'-3' exonuclease activity on nicked or gapped double-stranded DNA. DNA polymerase I, DNA ligase and the flap endonuclease may be constitutively associated with the PCNA heterotrimer forming a scanning complex able to couple DNA synthesis and Okazaki fragment maturation. The chain is Flap endonuclease 1 from Saccharolobus solfataricus (strain ATCC 35092 / DSM 1617 / JCM 11322 / P2) (Sulfolobus solfataricus).